We begin with the raw amino-acid sequence, 266 residues long: MADAEKNAVAEKNAVAEENAVAEENAVADKNATKEVLAEAASVLEPVGLPEEAELPAKIMEEFMRNSRKKDKLLCSQLQVVNFLQTFLAQEDNTDQNPDALASEDTSRQKATETKEQWKELKATYMDHVDVIKCALSEALPQVKEAHRKYTELQKAFEQLEAKKRVLEEKLQLAQKQWVLQQKRLQNLTKISAEVKRRRKRALEKLDGSHQELETLKQQAGQEQEKLQRNQSYLQLLCSLQNKLVISESKADDKDVKGPALPPKSP.

Positions 95–115 (DQNPDALASEDTSRQKATETK) are disordered. Basic and acidic residues predominate over residues 105-115 (DTSRQKATETK). The stretch at 136 to 237 (LSEALPQVKE…QRNQSYLQLL (102 aa)) forms a coiled coil. Phosphoserine occurs at positions 232 and 265.

In terms of assembly, component of the KNL1 complex composed of KNL1 and ZWINT. Part of the ten-subunit outer kinetochore KMN network that includes the KNL1, MIS12 and NDC80 complexes; a bioriented kinetochore contains approximately 150 copies of the network. Interacts with the MIS12 complex subunits MIS12 DSN1, and PMF1. Interacts with the NDC80 complex subunit NDC80 during mitosis. Interacts with ZW10. Interacts with CETN3. In terms of tissue distribution, expressed abundantly in brain and at lower levels in testis and kidney.

The protein resides in the nucleus. It localises to the chromosome. It is found in the centromere. Its subcellular location is the kinetochore. Its function is as follows. Acts as a component of the outer kinetochore KNL1 complex that serves as a docking point for spindle assembly checkpoint components and mediates microtubule-kinetochore interactions. Kinetochores, consisting of a centromere-associated inner segment and a microtubule-contacting outer segment, play a crucial role in chromosome segregation by mediating the physical connection between centromeric DNA and spindle microtubules. The outer kinetochore is made up of the ten-subunit KMN network, comprising the MIS12, NDC80 and KNL1 complexes, and auxiliary microtubule-associated components; together they connect the outer kinetochore with the inner kinetochore, bind microtubules, and mediate interactions with mitotic checkpoint proteins that delay anaphase until chromosomes are bioriented on the spindle. Targets the RZZ complex to the kinetochore at prometaphase. Recruits MAD2L1 to the kinetochore, but is not required for BUB1B localization. In addition to orienting mitotic chromosomes, it is also essential for alignment of homologous chromosomes during meiotic metaphase I. In meiosis I, required to activate the spindle assembly checkpoint at unattached kinetochores to correct erroneous kinetochore-microtubule attachments. This Rattus norvegicus (Rat) protein is Outer kinetochore KNL1 complex subunit ZWINT (Zwint).